The following is a 263-amino-acid chain: MSKRIAIYGKGGIGKSTIVSNIAAAYSKDYNVLVIGCDPKADTTRTLIGKRLPTILDIVKKKKNASIEEVLFEGYGNVKCVESGGPEPGVGCAGRGVIVAMGLLDKLGTFSDDIDIIIYDVLGDVVCGGFAVPLREDFADEVYIVTSGEYMALYAANNICRGIKKLKSNLGGIICNCRGIENEVQIVSEFAGKVGSKVIGIIPGSEMVQKSEIDAKTVIEKFGESEQADLYRELAKSIYSNEDFVIPEPMGVDEFDEFFRGFQ.

9-16 contacts ATP; the sequence is GKGGIGKS. Residue C92 participates in [4Fe-4S] cluster binding. R95 is modified (ADP-ribosylarginine; by dinitrogenase reductase ADP-ribosyltransferase). Position 127 (C127) interacts with [4Fe-4S] cluster.

Belongs to the NifH/BchL/ChlL family. In terms of assembly, homodimer. It depends on [4Fe-4S] cluster as a cofactor. The reversible ADP-ribosylation of Arg-95 inactivates the nitrogenase reductase and regulates nitrogenase activity.

It catalyses the reaction N2 + 8 reduced [2Fe-2S]-[ferredoxin] + 16 ATP + 16 H2O = H2 + 8 oxidized [2Fe-2S]-[ferredoxin] + 2 NH4(+) + 16 ADP + 16 phosphate + 6 H(+). Its function is as follows. The key enzymatic reactions in nitrogen fixation are catalyzed by the nitrogenase complex, which has 2 components: the iron protein and the molybdenum-iron protein. The protein is Nitrogenase iron protein 2 (nifH2) of Methanobacterium ivanovii.